The chain runs to 389 residues: DEAD-box ATP-dependent RNA helicase CshC (389 aa).

The short motif at 1-26 is the Q motif element; sequence MIKDMQPFLQQAWEKAGFKELTEIQK. The Helicase ATP-binding domain maps to 29–199; it reads IPTILEGQDV…RDLAVEPQLV (171 aa). 42 to 49 lines the ATP pocket; sequence SPTGTGKT. The short motif at 147-150 is the DEAD box element; it reads DEFD. The Helicase C-terminal domain occupies 209–379; that stretch reads LVEHTYIICE…TKPKAPKKKK (171 aa). Residues 368–389 are disordered; that stretch reads VETKPKAPKKKKPAFTGKKKPR. Positions 373–389 are enriched in basic residues; it reads KAPKKKKPAFTGKKKPR.

It carries out the reaction ATP + H2O = ADP + phosphate + H(+). DEAD-box RNA helicase. Probably has an RNA-dependent ATPase activity and a 3' to 5' RNA helicase activity that uses the energy of ATP hydrolysis to destabilize and unwind short RNA duplexes. In Bacillus cereus (strain ATCC 14579 / DSM 31 / CCUG 7414 / JCM 2152 / NBRC 15305 / NCIMB 9373 / NCTC 2599 / NRRL B-3711), this protein is DEAD-box ATP-dependent RNA helicase CshC (cshC).